The primary structure comprises 297 residues: GTPase Era (297 aa).

Residues 7-174 enclose the Era-type G domain; it reads HSGFVSIIGR…VQVVRDLLPE (168 aa). Residues 15–22 form a G1 region; sequence GRPNVGKS. 15–22 is a binding site for GTP; sequence GRPNVGKS. Positions 41–45 are G2; the sequence is QTTRN. The tract at residues 62–65 is G3; it reads DTPG. GTP is bound by residues 62–66 and 124–127; these read DTPGI and NKVD. The G4 stretch occupies residues 124–127; that stretch reads NKVD. A G5 region spans residues 153–155; sequence VSA. The KH type-2 domain maps to 205–282; the sequence is THDEVPYSVA…FLELFVRVSR (78 aa).

The protein belongs to the TRAFAC class TrmE-Era-EngA-EngB-Septin-like GTPase superfamily. Era GTPase family. In terms of assembly, monomer.

Its subcellular location is the cytoplasm. It is found in the cell inner membrane. Functionally, an essential GTPase that binds both GDP and GTP, with rapid nucleotide exchange. Plays a role in 16S rRNA processing and 30S ribosomal subunit biogenesis and possibly also in cell cycle regulation and energy metabolism. In Geotalea daltonii (strain DSM 22248 / JCM 15807 / FRC-32) (Geobacter daltonii), this protein is GTPase Era.